Consider the following 386-residue polypeptide: Succinate--CoA ligase [ADP-forming] subunit beta (386 aa).

ATP-binding residues include Lys-46, Glu-99, Ala-102, and Glu-107. Residues Asn-199 and Asp-213 each contribute to the Mg(2+) site. Substrate is bound by residues Asn-264 and 321 to 323; that span reads GIM.

The protein belongs to the succinate/malate CoA ligase beta subunit family. In terms of assembly, heterotetramer of two alpha and two beta subunits. Mg(2+) serves as cofactor.

The catalysed reaction is succinate + ATP + CoA = succinyl-CoA + ADP + phosphate. It catalyses the reaction GTP + succinate + CoA = succinyl-CoA + GDP + phosphate. It functions in the pathway carbohydrate metabolism; tricarboxylic acid cycle; succinate from succinyl-CoA (ligase route): step 1/1. Succinyl-CoA synthetase functions in the citric acid cycle (TCA), coupling the hydrolysis of succinyl-CoA to the synthesis of either ATP or GTP and thus represents the only step of substrate-level phosphorylation in the TCA. The beta subunit provides nucleotide specificity of the enzyme and binds the substrate succinate, while the binding sites for coenzyme A and phosphate are found in the alpha subunit. The protein is Succinate--CoA ligase [ADP-forming] subunit beta of Orientia tsutsugamushi (strain Ikeda) (Rickettsia tsutsugamushi).